Reading from the N-terminus, the 288-residue chain is Probable ketoamine kinase SAOUHSC_02908 (288 aa).

T86–L88 serves as a coordination point for ATP. The active-site Proton acceptor is D191.

The protein belongs to the fructosamine kinase family.

It catalyses the reaction N(6)-(D-ribulosyl)-L-lysine + ATP = N(6)-(3-O-phospho-D-ribulosyl)-L-lysine + ADP + H(+). It carries out the reaction N(6)-(D-erythrulosyl)-L-lysine + ATP = N(6)-(3-O-phospho-D-erythrulosyl)-L-lysine + ADP + H(+). The enzyme catalyses N(6)-D-ribulosyl-L-lysyl-[protein] + ATP = N(6)-(3-O-phospho-D-ribulosyl)-L-lysyl-[protein] + ADP + H(+). The catalysed reaction is N(6)-(D-erythrulosyl)-L-lysyl-[protein] + ATP = N(6)-(3-O-phospho-D-erythrulosyl)-L-lysyl-[protein] + ADP + H(+). Functionally, ketoamine kinase that phosphorylates ketoamines, such as erythruloselysine and ribuloselysine, on the third carbon of the sugar moiety to generate ketoamine 3-phosphate. Has higher activity on free lysine (erythruloselysine and ribuloselysine), than on ribuloselysine and erythruloselysine residues on glycated proteins. This is Probable ketoamine kinase SAOUHSC_02908 from Staphylococcus aureus (strain NCTC 8325 / PS 47).